A 436-amino-acid chain; its full sequence is Protein arginine methyltransferase NDUFAF7, mitochondrial (436 aa).

The transit peptide at 1–41 (MNALVRRCVARTGIPSIWRRKCFSSGNEPAESNHVTPMLRH) directs the protein to the mitochondrion. A disordered region spans residues 413–436 (QGGKACQSEAPSTSVPGFDELVWH).

It belongs to the NDUFAF7 family. As to quaternary structure, interacts with NDUFS2.

The protein resides in the mitochondrion. The enzyme catalyses L-arginyl-[protein] + 2 S-adenosyl-L-methionine = N(omega),N(omega)'-dimethyl-L-arginyl-[protein] + 2 S-adenosyl-L-homocysteine + 2 H(+). Its function is as follows. Arginine methyltransferase involved in the assembly or stability of mitochondrial NADH:ubiquinone oxidoreductase complex (complex I). Acts by mediating symmetric dimethylation of 'Arg-118' of NDUFS2 after it assembles into the complex I, stabilizing the early intermediate complex. In Rattus norvegicus (Rat), this protein is Protein arginine methyltransferase NDUFAF7, mitochondrial.